Consider the following 382-residue polypeptide: Succinate--CoA ligase [ADP-forming] subunit beta (382 aa).

One can recognise an ATP-grasp domain in the interval Lys-9–Glu-240. ATP is bound by residues Lys-46, Glu-98, Thr-101, and Glu-106. Mg(2+)-binding residues include Asn-195 and Asp-209. Substrate contacts are provided by residues Asn-260 and Gly-317 to Leu-319.

It belongs to the succinate/malate CoA ligase beta subunit family. Heterotetramer of two alpha and two beta subunits. It depends on Mg(2+) as a cofactor.

The catalysed reaction is succinate + ATP + CoA = succinyl-CoA + ADP + phosphate. The enzyme catalyses GTP + succinate + CoA = succinyl-CoA + GDP + phosphate. It functions in the pathway carbohydrate metabolism; tricarboxylic acid cycle; succinate from succinyl-CoA (ligase route): step 1/1. Succinyl-CoA synthetase functions in the citric acid cycle (TCA), coupling the hydrolysis of succinyl-CoA to the synthesis of either ATP or GTP and thus represents the only step of substrate-level phosphorylation in the TCA. The beta subunit provides nucleotide specificity of the enzyme and binds the substrate succinate, while the binding sites for coenzyme A and phosphate are found in the alpha subunit. This is Succinate--CoA ligase [ADP-forming] subunit beta from Hydrogenobaculum sp. (strain Y04AAS1).